A 557-amino-acid polypeptide reads, in one-letter code: Formate--tetrahydrofolate ligase 2 (557 aa).

Residue 66 to 73 (TPAGEGKT) coordinates ATP.

It belongs to the formate--tetrahydrofolate ligase family.

It catalyses the reaction (6S)-5,6,7,8-tetrahydrofolate + formate + ATP = (6R)-10-formyltetrahydrofolate + ADP + phosphate. Its pathway is one-carbon metabolism; tetrahydrofolate interconversion. In Streptococcus pyogenes serotype M18 (strain MGAS8232), this protein is Formate--tetrahydrofolate ligase 2.